Consider the following 460-residue polypeptide: GTPase Der (460 aa).

EngA-type G domains follow at residues 3 to 167 (FTIA…PEPT) and 189 to 364 (IRVA…AIWN). GTP contacts are provided by residues 9–16 (GRPNVGKS), 56–60 (DTAGL), 119–122 (NKSE), 195–202 (GRPNAGKS), 242–246 (DTAGL), and 307–310 (NKWD). The region spanning 365 to 449 (RRVPTAALNR…PIRITLREKA (85 aa)) is the KH-like domain.

Belongs to the TRAFAC class TrmE-Era-EngA-EngB-Septin-like GTPase superfamily. EngA (Der) GTPase family. Associates with the 50S ribosomal subunit.

Its function is as follows. GTPase that plays an essential role in the late steps of ribosome biogenesis. The protein is GTPase Der of Nitrobacter hamburgensis (strain DSM 10229 / NCIMB 13809 / X14).